Here is a 233-residue protein sequence, read N- to C-terminus: Probable GTP-binding protein EngB (233 aa).

The 208-residue stretch at 21–228 folds into the EngB-type G domain; the sequence is GLPEVALVGR…WRWIREHVQD (208 aa). GTP contacts are provided by residues 29-36 and 56-60; these read GRSNVGKS and GRTQA. Mg(2+) is bound by residues S36 and T58. Residues 68–87 are disordered; that stretch reads PQGKPRPEGEPQPDKDAGRT. Positions 72–85 are enriched in basic and acidic residues; that stretch reads PRPEGEPQPDKDAG. GTP-binding positions include 107 to 110, 174 to 177, and 207 to 209; these read DMPG, TKAD, and FSA.

The protein belongs to the TRAFAC class TrmE-Era-EngA-EngB-Septin-like GTPase superfamily. EngB GTPase family. Mg(2+) is required as a cofactor.

Functionally, necessary for normal cell division and for the maintenance of normal septation. This chain is Probable GTP-binding protein EngB, found in Symbiobacterium thermophilum (strain DSM 24528 / JCM 14929 / IAM 14863 / T).